The sequence spans 223 residues: Ribonuclease T (223 aa).

Positions 20 to 194 (VVIDVETAGF…YDTEQTALLF (175 aa)) constitute an Exonuclease domain. Mg(2+) is bound by residues Asp23, Glu25, His181, and Asp186. The Proton donor/acceptor role is filled by His181.

It belongs to the RNase T family. In terms of assembly, homodimer. Mg(2+) serves as cofactor.

Its function is as follows. Trims short 3' overhangs of a variety of RNA species, leaving a one or two nucleotide 3' overhang. Responsible for the end-turnover of tRNA: specifically removes the terminal AMP residue from uncharged tRNA (tRNA-C-C-A). Also appears to be involved in tRNA biosynthesis. The protein is Ribonuclease T of Cronobacter sakazakii (strain ATCC BAA-894) (Enterobacter sakazakii).